The sequence spans 158 residues: Phosphopantetheine adenylyltransferase (158 aa).

Ser-8 serves as a coordination point for substrate. Residues 8–9 (SF) and His-16 contribute to the ATP site. Residues Lys-40, Thr-72, and Arg-86 each contribute to the substrate site. ATP contacts are provided by residues 87-89 (GLR), Glu-97, and 122-128 (HSFLSSS).

The protein belongs to the bacterial CoaD family. In terms of assembly, homohexamer. Requires Mg(2+) as cofactor.

Its subcellular location is the cytoplasm. It catalyses the reaction (R)-4'-phosphopantetheine + ATP + H(+) = 3'-dephospho-CoA + diphosphate. It participates in cofactor biosynthesis; coenzyme A biosynthesis; CoA from (R)-pantothenate: step 4/5. Reversibly transfers an adenylyl group from ATP to 4'-phosphopantetheine, yielding dephospho-CoA (dPCoA) and pyrophosphate. The chain is Phosphopantetheine adenylyltransferase from Prochlorococcus marinus (strain NATL1A).